A 409-amino-acid chain; its full sequence is Serine/threonine transporter SstT (409 aa).

9 helical membrane-spanning segments follow: residues 24–44, 48–68, 82–102, 142–162, 194–214, 218–238, 292–312, 319–339, and 365–385; these read LALG…AGLF, FVGA…AATI, IIVL…IAGM, AIAN…GAAL, LGIF…ALAG, LLAV…PAIV, IPLG…VLAM, GIQV…VSAC, and VAMQ…SAET.

The protein belongs to the dicarboxylate/amino acid:cation symporter (DAACS) (TC 2.A.23) family.

The protein localises to the cell inner membrane. The catalysed reaction is L-serine(in) + Na(+)(in) = L-serine(out) + Na(+)(out). It catalyses the reaction L-threonine(in) + Na(+)(in) = L-threonine(out) + Na(+)(out). In terms of biological role, involved in the import of serine and threonine into the cell, with the concomitant import of sodium (symport system). In Neisseria meningitidis serogroup C (strain 053442), this protein is Serine/threonine transporter SstT.